Reading from the N-terminus, the 440-residue chain is Argininosuccinate lyase (440 aa).

It belongs to the lyase 1 family. Argininosuccinate lyase subfamily.

The protein resides in the cytoplasm. The catalysed reaction is 2-(N(omega)-L-arginino)succinate = fumarate + L-arginine. It functions in the pathway amino-acid biosynthesis; L-arginine biosynthesis; L-arginine from L-ornithine and carbamoyl phosphate: step 3/3. This chain is Argininosuccinate lyase, found in Clostridium botulinum (strain Kyoto / Type A2).